Reading from the N-terminus, the 341-residue chain is GDP-mannose transporter GONST5 (341 aa).

Transmembrane regions (helical) follow at residues 17-37, 44-64, 89-109, 141-161, 192-212, 233-253, 260-280, and 284-304; these read LSIL…KWIF, FPLS…YIVI, FVFC…PVSF, LVPI…FNVF, INTV…PAFL, IILF…FYVI, TFNV…WMIF, and ISPM…FYGY. The region spanning 33-152 is the EamA domain; the sequence is NKWIFQKLDF…PIVGGILLTS (120 aa).

It belongs to the TPT transporter family. TPT (TC 2.A.7.9) subfamily. In terms of tissue distribution, expressed in rosette leaves, flowers and siliques.

The protein localises to the golgi apparatus membrane. Its function is as follows. GDP-mannose transporter that may be involved in the import of GDP-mannose from the cytoplasm into the Golgi lumen. The chain is GDP-mannose transporter GONST5 (GONST5) from Arabidopsis thaliana (Mouse-ear cress).